We begin with the raw amino-acid sequence, 623 residues long: Laccase-1 (623 aa).

The N-terminal stretch at 1–22 (MKTFTSALALVVGMLAPGAVVA) is a signal peptide. A propeptide spanning residues 23–50 (APPSTPAQRDLVELREARQEGGKDLRPR) is cleaved from the precursor. Cysteine 54 and cysteine 62 are joined by a disulfide. 2 N-linked (GlcNAc...) asparagine glycosylation sites follow: asparagine 89 and asparagine 138. Residues histidine 143, histidine 145, histidine 188, and histidine 190 each contribute to the Cu cation site. 2 cysteine pairs are disulfide-bonded: cysteine 164/cysteine 590 and cysteine 348/cysteine 382. N-linked (GlcNAc...) asparagine glycans are attached at residues asparagine 251, asparagine 266, asparagine 294, and asparagine 339. N-linked (GlcNAc...) asparagine glycans are attached at residues asparagine 426 and asparagine 446. Residues histidine 481, histidine 484, histidine 486, histidine 552, cysteine 553, histidine 554, and histidine 558 each coordinate Cu cation. A propeptide spanning residues 610–623 (KRRRWVEESEWLVR) is cleaved from the precursor.

Belongs to the multicopper oxidase family. As to quaternary structure, monomer. Requires Cu cation as cofactor. In terms of tissue distribution, secreted protein; extracellular space.

The enzyme catalyses 4 hydroquinone + O2 = 4 benzosemiquinone + 2 H2O. Lignin degradation and detoxification of lignin-derived products. The protein is Laccase-1 (LAC1) of Melanocarpus albomyces.